The sequence spans 171 residues: Large ribosomal subunit protein uL5 (171 aa).

The protein belongs to the universal ribosomal protein uL5 family. In terms of assembly, part of the 50S ribosomal subunit; contacts the 5S rRNA and probably tRNA. Forms a bridge to the 30S subunit in the 70S ribosome.

In terms of biological role, this is one of the proteins that bind and probably mediate the attachment of the 5S RNA into the large ribosomal subunit, where it forms part of the central protuberance. In the 70S ribosome it contacts protein S13 of the 30S subunit (bridge B1b), connecting the 2 subunits; this bridge is implicated in subunit movement. May contact the P site tRNA; the 5S rRNA and some of its associated proteins might help stabilize positioning of ribosome-bound tRNAs. In Methanocorpusculum labreanum (strain ATCC 43576 / DSM 4855 / Z), this protein is Large ribosomal subunit protein uL5.